Here is a 723-residue protein sequence, read N- to C-terminus: Probable dipeptidyl-peptidase 5 (723 aa).

Residues 1–19 form the signal peptide; that stretch reads MAALRWLSAVVAVSTTVLA. N-linked (GlcNAc...) asparagine glycans are attached at residues Asn-79, Asn-97, Asn-154, Asn-255, Asn-381, and Asn-451. Ser-561 (charge relay system) is an active-site residue. Asn-608 carries N-linked (GlcNAc...) asparagine glycosylation. Catalysis depends on charge relay system residues Asp-644 and His-676.

The protein belongs to the peptidase S9C family.

It is found in the secreted. Extracellular dipeptidyl-peptidase which removes N-terminal dipeptides sequentially from polypeptides having unsubstituted N-termini. The sequence is that of Probable dipeptidyl-peptidase 5 (dpp5) from Aspergillus terreus (strain NIH 2624 / FGSC A1156).